A 250-amino-acid polypeptide reads, in one-letter code: Glutamate racemase (250 aa).

Substrate is bound by residues 7-8 and 39-40; these read DS and YG. Cysteine 70 (proton donor/acceptor) is an active-site residue. 71-72 lines the substrate pocket; the sequence is NT. Cysteine 180 functions as the Proton donor/acceptor in the catalytic mechanism. A substrate-binding site is contributed by 181–182; it reads TH.

This sequence belongs to the aspartate/glutamate racemases family.

The catalysed reaction is L-glutamate = D-glutamate. It functions in the pathway cell wall biogenesis; peptidoglycan biosynthesis. Its function is as follows. Provides the (R)-glutamate required for cell wall biosynthesis. This is Glutamate racemase from Campylobacter jejuni subsp. jejuni serotype O:2 (strain ATCC 700819 / NCTC 11168).